The following is a 469-amino-acid chain: Phosphoglucosamine mutase (469 aa).

The active-site Phosphoserine intermediate is the Ser-117. Ser-117, Asp-263, Asp-265, and Asp-267 together coordinate Mg(2+). Ser-117 carries the phosphoserine modification.

This sequence belongs to the phosphohexose mutase family. Mg(2+) is required as a cofactor. Post-translationally, activated by phosphorylation.

It catalyses the reaction alpha-D-glucosamine 1-phosphate = D-glucosamine 6-phosphate. Functionally, catalyzes the conversion of glucosamine-6-phosphate to glucosamine-1-phosphate. The sequence is that of Phosphoglucosamine mutase from Anaeromyxobacter sp. (strain Fw109-5).